Here is a 121-residue protein sequence, read N- to C-terminus: DNA-directed RNA polymerase subunit omega (121 aa).

Residues 95-121 (DGDAANDLQGEEDDLGLGLDEAEDLGF) are disordered. Acidic residues predominate over residues 103–121 (QGEEDDLGLGLDEAEDLGF).

Belongs to the RNA polymerase subunit omega family. In terms of assembly, the RNAP catalytic core consists of 2 alpha, 1 beta, 1 beta' and 1 omega subunit. When a sigma factor is associated with the core the holoenzyme is formed, which can initiate transcription.

The enzyme catalyses RNA(n) + a ribonucleoside 5'-triphosphate = RNA(n+1) + diphosphate. Promotes RNA polymerase assembly. Latches the N- and C-terminal regions of the beta' subunit thereby facilitating its interaction with the beta and alpha subunits. This chain is DNA-directed RNA polymerase subunit omega, found in Magnetococcus marinus (strain ATCC BAA-1437 / JCM 17883 / MC-1).